Reading from the N-terminus, the 308-residue chain is Ribonuclease Z (308 aa).

Zn(2+)-binding residues include H61, H63, D65, H66, H139, D210, and H268. D65 serves as the catalytic Proton acceptor.

The protein belongs to the RNase Z family. Homodimer. The cofactor is Zn(2+).

It carries out the reaction Endonucleolytic cleavage of RNA, removing extra 3' nucleotides from tRNA precursor, generating 3' termini of tRNAs. A 3'-hydroxy group is left at the tRNA terminus and a 5'-phosphoryl group is left at the trailer molecule.. In terms of biological role, zinc phosphodiesterase, which displays some tRNA 3'-processing endonuclease activity. Probably involved in tRNA maturation, by removing a 3'-trailer from precursor tRNA. This is Ribonuclease Z from Halobacterium salinarum (strain ATCC 700922 / JCM 11081 / NRC-1) (Halobacterium halobium).